A 288-amino-acid chain; its full sequence is ATP synthase gamma chain (288 aa).

It belongs to the ATPase gamma chain family. In terms of assembly, F-type ATPases have 2 components, CF(1) - the catalytic core - and CF(0) - the membrane proton channel. CF(1) has five subunits: alpha(3), beta(3), gamma(1), delta(1), epsilon(1). CF(0) has three main subunits: a, b and c.

The protein resides in the cell inner membrane. Produces ATP from ADP in the presence of a proton gradient across the membrane. The gamma chain is believed to be important in regulating ATPase activity and the flow of protons through the CF(0) complex. This chain is ATP synthase gamma chain, found in Laribacter hongkongensis (strain HLHK9).